The following is a 508-amino-acid chain: Endoglucanase 6 (508 aa).

The N-terminal stretch at 1-33 (MLAASLRVEAVAVVAAAVLVLLLSPAAVVVVAG) is a signal peptide. Residue D89 is the Nucleophile of the active site. Catalysis depends on residues H419, D471, and E480.

The protein belongs to the glycosyl hydrolase 9 (cellulase E) family.

The protein resides in the secreted. It carries out the reaction Endohydrolysis of (1-&gt;4)-beta-D-glucosidic linkages in cellulose, lichenin and cereal beta-D-glucans.. This chain is Endoglucanase 6, found in Oryza sativa subsp. japonica (Rice).